Here is a 122-residue protein sequence, read N- to C-terminus: Large ribosomal subunit protein uL14 (122 aa).

The protein belongs to the universal ribosomal protein uL14 family. In terms of assembly, part of the 50S ribosomal subunit. Forms a cluster with proteins L3 and L19. In the 70S ribosome, L14 and L19 interact and together make contacts with the 16S rRNA in bridges B5 and B8.

Functionally, binds to 23S rRNA. Forms part of two intersubunit bridges in the 70S ribosome. The chain is Large ribosomal subunit protein uL14 from Oleidesulfovibrio alaskensis (strain ATCC BAA-1058 / DSM 17464 / G20) (Desulfovibrio alaskensis).